A 156-amino-acid chain; its full sequence is Small ribosomal subunit protein uS7 (156 aa).

Belongs to the universal ribosomal protein uS7 family. In terms of assembly, part of the 30S ribosomal subunit. Contacts proteins S9 and S11.

One of the primary rRNA binding proteins, it binds directly to 16S rRNA where it nucleates assembly of the head domain of the 30S subunit. Is located at the subunit interface close to the decoding center, probably blocks exit of the E-site tRNA. The polypeptide is Small ribosomal subunit protein uS7 (Limosilactobacillus reuteri (strain DSM 20016) (Lactobacillus reuteri)).